A 583-amino-acid chain; its full sequence is Protein disulfide-isomerase-like protein of the testis (583 aa).

The first 17 residues, 1–17 (MDLLWMPLLLVAARISA), serve as a signal peptide directing secretion. Asn58, Asn128, Asn160, and Asn340 each carry an N-linked (GlcNAc...) asparagine glycan. One can recognise a Thioredoxin domain in the interval 388–451 (LVKQLVGKNF…IAKIDITAND (64 aa)). Basic and acidic residues-rich tracts occupy residues 522–531 (EVPMMKKELP) and 540–559 (NVTK…KTSE). The interval 522-583 (EVPMMKKELP…KKKPKVKEEL (62 aa)) is disordered. A glycan (N-linked (GlcNAc...) asparagine) is linked at Asn540. Over residues 573 to 583 (QKKKPKVKEEL) the composition is skewed to basic residues. Positions 580–583 (KEEL) match the Prevents secretion from ER motif.

This sequence belongs to the protein disulfide isomerase family. In terms of assembly, homodimer. The homodimer is not disulfide-linked. Interacts with ERO1A and CLGN. N-glycosylated.

It localises to the endoplasmic reticulum. Probable redox-inactive chaperone involved in spermatogenesis. In Macaca fascicularis (Crab-eating macaque), this protein is Protein disulfide-isomerase-like protein of the testis (PDILT).